The chain runs to 300 residues: Acetylglutamate kinase (300 aa).

Substrate is bound by residues 68–69 (GG), arginine 90, and asparagine 195.

The protein belongs to the acetylglutamate kinase family. ArgB subfamily.

The protein localises to the cytoplasm. The catalysed reaction is N-acetyl-L-glutamate + ATP = N-acetyl-L-glutamyl 5-phosphate + ADP. Its pathway is amino-acid biosynthesis; L-arginine biosynthesis; N(2)-acetyl-L-ornithine from L-glutamate: step 2/4. Catalyzes the ATP-dependent phosphorylation of N-acetyl-L-glutamate. The polypeptide is Acetylglutamate kinase (Stutzerimonas stutzeri (strain A1501) (Pseudomonas stutzeri)).